The chain runs to 204 residues: Thymidylate kinase (204 aa).

10-17 (GGDGAGKT) serves as a coordination point for ATP.

It belongs to the thymidylate kinase family.

It catalyses the reaction dTMP + ATP = dTDP + ADP. Phosphorylation of dTMP to form dTDP in both de novo and salvage pathways of dTTP synthesis. In Cutibacterium acnes (strain DSM 16379 / KPA171202) (Propionibacterium acnes), this protein is Thymidylate kinase.